A 328-amino-acid polypeptide reads, in one-letter code: Lytic polysaccharide monooxygenase aasB (328 aa).

The signal sequence occupies residues 1–18 (MKAFFAISASTLLATVHG). His-19 is a Cu(2+) binding site. A disulfide bridge links Cys-40 with Cys-43. Asn-54 carries an N-linked (GlcNAc...) asparagine glycan. Cystine bridges form between Cys-66–Cys-245, Cys-102–Cys-203, Cys-118–Cys-145, Cys-153–Cys-161, Cys-167–Cys-173, and Cys-181–Cys-192. Cu(2+) is bound at residue His-109. Cu(2+) is bound at residue Tyr-242. Asn-306 carries N-linked (GlcNAc...) asparagine glycosylation.

This sequence belongs to the polysaccharide monooxygenase AA13 family. Cu(2+) serves as cofactor.

The protein resides in the secreted. It carries out the reaction starch + reduced acceptor + O2 = D-glucono-1,5-lactone-terminated malto-oligosaccharides + short-chain malto-oligosaccharides + acceptor + H2O.. In terms of biological role, lytic polysaccharide monooxygenase involved in breakdown of granular resistant starch. This chain is Lytic polysaccharide monooxygenase aasB, found in Emericella nidulans (strain FGSC A4 / ATCC 38163 / CBS 112.46 / NRRL 194 / M139) (Aspergillus nidulans).